We begin with the raw amino-acid sequence, 283 residues long: Polyamine aminopropyltransferase (283 aa).

The 237-residue stretch at 5–241 (NNWYIEHFER…GWWSVTLARK (237 aa)) folds into the PABS domain. Position 35 (Gln35) interacts with S-methyl-5'-thioadenosine. The spermidine site is built by His66 and Asp90. S-methyl-5'-thioadenosine is bound by residues Asp110 and 141–142 (DG). The active-site Proton acceptor is Asp160. 160–163 (DSTD) serves as a coordination point for spermidine. An S-methyl-5'-thioadenosine-binding site is contributed by Pro167.

The protein belongs to the spermidine/spermine synthase family. In terms of assembly, homodimer or homotetramer.

It is found in the cytoplasm. The enzyme catalyses S-adenosyl 3-(methylsulfanyl)propylamine + putrescine = S-methyl-5'-thioadenosine + spermidine + H(+). It functions in the pathway amine and polyamine biosynthesis; spermidine biosynthesis; spermidine from putrescine: step 1/1. Its function is as follows. Catalyzes the irreversible transfer of a propylamine group from the amino donor S-adenosylmethioninamine (decarboxy-AdoMet) to putrescine (1,4-diaminobutane) to yield spermidine. The protein is Polyamine aminopropyltransferase of Stenotrophomonas maltophilia (strain R551-3).